Here is a 350-residue protein sequence, read N- to C-terminus: Methionine import ATP-binding protein MetN (350 aa).

The ABC transporter domain maps to Ile-2–Val-241. An ATP-binding site is contributed by Gly-38–Ser-45.

Belongs to the ABC transporter superfamily. Methionine importer (TC 3.A.1.24) family. As to quaternary structure, the complex is composed of two ATP-binding proteins (MetN), two transmembrane proteins (MetI) and a solute-binding protein (MetQ).

The protein resides in the cell inner membrane. The catalysed reaction is L-methionine(out) + ATP + H2O = L-methionine(in) + ADP + phosphate + H(+). The enzyme catalyses D-methionine(out) + ATP + H2O = D-methionine(in) + ADP + phosphate + H(+). Its function is as follows. Part of the ABC transporter complex MetNIQ involved in methionine import. Responsible for energy coupling to the transport system. This chain is Methionine import ATP-binding protein MetN, found in Francisella tularensis subsp. holarctica (strain LVS).